A 214-amino-acid polypeptide reads, in one-letter code: A-type ATP synthase subunit D (214 aa).

It belongs to the V-ATPase D subunit family. In terms of assembly, has multiple subunits with at least A(3), B(3), C, D, E, F, H, I and proteolipid K(x).

It is found in the cell membrane. Component of the A-type ATP synthase that produces ATP from ADP in the presence of a proton gradient across the membrane. The protein is A-type ATP synthase subunit D of Thermococcus gammatolerans (strain DSM 15229 / JCM 11827 / EJ3).